The following is a 561-amino-acid chain: Mesoderm induction early response protein 2 (561 aa).

2 disordered regions span residues 1–28 (MAEASSLERQSPGAASCLPHSLCPGEPN) and 52–188 (QNYG…EDPL). Residue Ser-11 is modified to Phosphoserine. The segment covering 140–165 (QSSADDLTPSVTSHEASDLFPSQSGS) has biased composition (polar residues). One can recognise an ELM2 domain in the interval 195-292 (KEIMVGPQFQ…EALRRLRFNV (98 aa)). The 53-residue stretch at 297-349 (DGLCAWSEEERRNFEHGFRVHGKNFHLIQANKVRTRSVGECVEYYYLWKKSER) folds into the SANT domain. The interval 360 to 515 (GRRKYGPSGN…DGEPEETVGP (156 aa)) is disordered. Low complexity predominate over residues 417 to 428 (LSMGSSMSRSLG). Positions 439 to 451 (SSEPGPRLFPPLD) are enriched in pro residues. Residues 453-482 (PSALPSSRRPPALAEPAFFPPATAAPEPGA) show a composition bias toward low complexity.

Part of a complex containing at least CDYL, MIER1, MIER2, HDAC1 and HDAC2.

It is found in the nucleus. Functionally, transcriptional repressor. In Bos taurus (Bovine), this protein is Mesoderm induction early response protein 2 (MIER2).